The chain runs to 866 residues: Glycoprotein gp2 (866 aa).

The N-terminal stretch at 1–25 (MGFIYARKLLLCMAVSIYAIGSTTT) is a signal peptide. Disordered regions lie at residues 24-185 (TTTE…TDTT) and 319-619 (TAAT…IVPQ). The N-linked (GlcNAc...) asparagine; by host glycan is linked to N48. Over residues 319 to 442 (TAATTTAATT…PDSSTGSTST (124 aa)) the composition is skewed to low complexity. Residues 443-463 (AEPSSTFTLTPSTATPSTDQF) are compositionally biased toward polar residues. Low complexity-rich tracts occupy residues 464-499 (TGSSASTESDSTDSSTVPTTGTESITESSSTTEAST) and 514-526 (TPDGNTTSGNTTP). N518 is a glycosylation site (N-linked (GlcNAc...) asparagine; by host). Positions 535–561 (FADTQQTPDNGVSTQHTTINDHTTANA) are enriched in polar residues. Basic residues predominate over residues 564-574 (HAGHHRGRAGG). N-linked (GlcNAc...) asparagine; by host glycosylation is found at N611 and N659. Residues 835 to 855 (FALVAATTLTVTILCLLCCLY) form a helical membrane-spanning segment.

The protein localises to the virion membrane. In terms of biological role, virulence factor. This is Glycoprotein gp2 from Equus caballus (Horse).